We begin with the raw amino-acid sequence, 123 residues long: Large ribosomal subunit protein bL12 (123 aa).

The protein belongs to the bacterial ribosomal protein bL12 family. Homodimer. Part of the ribosomal stalk of the 50S ribosomal subunit. Forms a multimeric L10(L12)X complex, where L10 forms an elongated spine to which 2 to 4 L12 dimers bind in a sequential fashion. Binds GTP-bound translation factors.

Forms part of the ribosomal stalk which helps the ribosome interact with GTP-bound translation factors. Is thus essential for accurate translation. The chain is Large ribosomal subunit protein bL12 from Laribacter hongkongensis (strain HLHK9).